The following is a 445-amino-acid chain: Glucose-6-phosphate isomerase (445 aa).

Residue Glu-287 is the Proton donor of the active site. Active-site residues include His-308 and Lys-422.

This sequence belongs to the GPI family.

Its subcellular location is the cytoplasm. The catalysed reaction is alpha-D-glucose 6-phosphate = beta-D-fructose 6-phosphate. It participates in carbohydrate biosynthesis; gluconeogenesis. Its pathway is carbohydrate degradation; glycolysis; D-glyceraldehyde 3-phosphate and glycerone phosphate from D-glucose: step 2/4. In terms of biological role, catalyzes the reversible isomerization of glucose-6-phosphate to fructose-6-phosphate. This chain is Glucose-6-phosphate isomerase, found in Bacteroides fragilis (strain ATCC 25285 / DSM 2151 / CCUG 4856 / JCM 11019 / LMG 10263 / NCTC 9343 / Onslow / VPI 2553 / EN-2).